Reading from the N-terminus, the 116-residue chain is Ribonuclease P protein component (116 aa).

Belongs to the RnpA family. In terms of assembly, consists of a catalytic RNA component (M1 or rnpB) and a protein subunit.

It carries out the reaction Endonucleolytic cleavage of RNA, removing 5'-extranucleotides from tRNA precursor.. Its function is as follows. RNaseP catalyzes the removal of the 5'-leader sequence from pre-tRNA to produce the mature 5'-terminus. It can also cleave other RNA substrates such as 4.5S RNA. The protein component plays an auxiliary but essential role in vivo by binding to the 5'-leader sequence and broadening the substrate specificity of the ribozyme. This chain is Ribonuclease P protein component, found in Acholeplasma laidlawii (strain PG-8A).